The sequence spans 348 residues: MEKQRLKAQLSSLRVPLFSVPWPGQCSNKAEVIEARMMKWADEHNLLVTDEYRNRVIRTRYGLLAARCYPNAGEVLLQAIADYLVWFFLADDLFVDRVEVATDETIRNLTAMVDVLDLNVAGSPPVFGELAWLDVCQRLRRLLQAETFERFAQGMRLWATTAALQILNHLRPTSVGIREYQTIRRHTSGMNPCASLADAANKGSVQACEFYDADVQTLVRQTNNIVCWANDIQSLRIEIHQPGQFRNIVTIYAQQGQSLQDAVETTATRVNKEIAGFCELADAVTARPISDELHGLIDGLKYWIRGYLDWVVHDTMRYADQFIESDADDRRFSAPDLSLLKKKLLVCD.

Positions 91 and 96 each coordinate Mg(2+). A DDXXXD motif motif is present at residues aspartate 91–aspartate 96. Arginine 184 contacts substrate. 3 residues coordinate Mg(2+): asparagine 230, serine 234, and glutamate 238.

The protein belongs to the terpene synthase family. The cofactor is Mg(2+).

The catalysed reaction is (2E,6E)-farnesyl diphosphate + H2O = (+)-corvol ether B + diphosphate. It catalyses the reaction (2E,6E)-farnesyl diphosphate + H2O = (+)-corvol ether A + diphosphate. Functionally, terpene synthase that catalyzes the conversion of (2E,6E)-farnesyl diphosphate (FPP) into sesquiterpenes which are important for fungi-environment interactions. Produces a mixture consisting of 8 sesquiterpenes including corvol ethers A and B, as well as traces of epizonarene, gamma-cadinene, delta-cadinene, alpha-cadinene, alpha-cadinol, and an unidentified sesquiterpene. Produces both corvol ether A and corvol ether B in similar concentrations. In Metarhizium guizhouense (strain ARSEF 977), this protein is Sesquiterpene synthase MGU_11447.